Here is a 1078-residue protein sequence, read N- to C-terminus: Zinc finger protein 827 (1078 aa).

The span at Met1–Lys10 shows a compositional bias: basic and acidic residues. The interval Met1–Ser14 is mediates direct interaction with RBBP4. Positions Met1–Pro76 are disordered. Residues Arg3–Lys5 carry the RRK motif; mediates NuRD recruitment to telomeres motif. 2 stretches are compositionally biased toward polar residues: residues Tyr33–Glu42 and Glu62–Pro76. Glycyl lysine isopeptide (Lys-Gly) (interchain with G-Cter in SUMO2) cross-links involve residues Lys175, Lys215, and Lys225. Residues Ser307–Gln341 are disordered. Residues Val326 to Gln338 are compositionally biased toward pro residues. Glycyl lysine isopeptide (Lys-Gly) (interchain with G-Cter in SUMO2) cross-links involve residues Lys357 and Lys369. C2H2-type zinc fingers lie at residues Phe371–His393, His399–His421, and Phe430–His452. Glycyl lysine isopeptide (Lys-Gly) (interchain with G-Cter in SUMO2) cross-links involve residues Lys463, Lys472, Lys520, Lys546, Lys577, Lys584, and Lys594. A disordered region spans residues Ile466 to Gly490. Residues Lys594–Leu640 are disordered. The segment covering Val613–Glu627 has biased composition (low complexity). Glycyl lysine isopeptide (Lys-Gly) (interchain with G-Cter in SUMO2) cross-links involve residues Lys636 and Lys655. Residue Lys670 forms a Glycyl lysine isopeptide (Lys-Gly) (interchain with G-Cter in SUMO1); alternate linkage. Residue Lys670 forms a Glycyl lysine isopeptide (Lys-Gly) (interchain with G-Cter in SUMO2); alternate linkage. Glycyl lysine isopeptide (Lys-Gly) (interchain with G-Cter in SUMO2) cross-links involve residues Lys701, Lys707, Lys739, Lys775, and Lys795. 2 C2H2-type zinc fingers span residues Phe814–His836 and Tyr842–His864. Glycyl lysine isopeptide (Lys-Gly) (interchain with G-Cter in SUMO2) cross-links involve residues Lys867 and Lys888. 2 C2H2-type zinc fingers span residues Tyr894–His916 and Ile926–His949. The segment covering Ile945 to Pro957 has biased composition (basic and acidic residues). The interval Ile945 to Gly990 is disordered. Residue Lys955 forms a Glycyl lysine isopeptide (Lys-Gly) (interchain with G-Cter in SUMO2) linkage. Over residues Ser958 to Ser974 the composition is skewed to low complexity. Over residues Asn976–Gln985 the composition is skewed to basic and acidic residues. A Glycyl lysine isopeptide (Lys-Gly) (interchain with G-Cter in SUMO2) cross-link involves residue Lys1011. C2H2-type zinc fingers lie at residues Phe1016–His1038 and Phe1044–His1066.

The protein belongs to the krueppel C2H2-type zinc-finger protein family. As to quaternary structure, part of a transcription inhibitory ribonucleoprotein complex composed at least of the circular RNA circZNF827, HNRNPK and HNRNPL. Interacts with the nucleosome remodeling and histone deacetylase/NuRD complex. Interacts with RBBP4; the interaction is direct and recruits RBBP4, a component of the NuRD complex, to telomeres.

Its subcellular location is the nucleus. The protein localises to the chromosome. The protein resides in the telomere. Functionally, as part of a ribonucleoprotein complex composed at least of HNRNPK, HNRNPL and the circular RNA circZNF827 that nucleates the complex on chromatin, may negatively regulate the transcription of genes involved in neuronal differentiation. Could also recruit the nucleosome remodeling and histone deacetylase/NuRD complex to telomeric regions of chromosomes to regulate chromatin remodeling as part of telomere maintenance. The chain is Zinc finger protein 827 (Znf827) from Mus musculus (Mouse).